Consider the following 183-residue polypeptide: Adenine phosphoribosyltransferase (183 aa).

Belongs to the purine/pyrimidine phosphoribosyltransferase family. In terms of assembly, homodimer.

Its subcellular location is the cytoplasm. The catalysed reaction is AMP + diphosphate = 5-phospho-alpha-D-ribose 1-diphosphate + adenine. It participates in purine metabolism; AMP biosynthesis via salvage pathway; AMP from adenine: step 1/1. Its function is as follows. Catalyzes a salvage reaction resulting in the formation of AMP, that is energically less costly than de novo synthesis. This chain is Adenine phosphoribosyltransferase, found in Photorhabdus laumondii subsp. laumondii (strain DSM 15139 / CIP 105565 / TT01) (Photorhabdus luminescens subsp. laumondii).